A 936-amino-acid chain; its full sequence is UPF0746 protein DDB_G0280787 (936 aa).

Positions 1–19 are enriched in basic and acidic residues; it reads MISNKRKEIDTIDGHHEKD. The segment at 1–30 is disordered; it reads MISNKRKEIDTIDGHHEKDNDDDDSDGIDN. The region spanning 44-78 is the SAP domain; sequence SGSTNYRELQIIAKSLGLASNGKKQLVYNRIEGYF. Residues 91 to 110 are disordered; it reads ETNQQEEKKEEEQQQPQPQE.

Belongs to the UPF0746 family.

The polypeptide is UPF0746 protein DDB_G0280787 (Dictyostelium discoideum (Social amoeba)).